The chain runs to 318 residues: Glycine--tRNA ligase alpha subunit (318 aa).

It belongs to the class-II aminoacyl-tRNA synthetase family. In terms of assembly, tetramer of two alpha and two beta subunits.

Its subcellular location is the cytoplasm. It catalyses the reaction tRNA(Gly) + glycine + ATP = glycyl-tRNA(Gly) + AMP + diphosphate. This chain is Glycine--tRNA ligase alpha subunit (glyQ), found in Moraxella catarrhalis (Branhamella catarrhalis).